The sequence spans 193 residues: Thymidine kinase (193 aa).

ATP contacts are provided by residues 9–16 (SAMNAGKS) and 87–90 (DEAQ). Glu-88 functions as the Proton acceptor in the catalytic mechanism. Residues Cys-145, Cys-147, Cys-182, and His-185 each coordinate Zn(2+).

This sequence belongs to the thymidine kinase family. In terms of assembly, homotetramer.

The protein localises to the cytoplasm. It catalyses the reaction thymidine + ATP = dTMP + ADP + H(+). The sequence is that of Thymidine kinase from Idiomarina loihiensis (strain ATCC BAA-735 / DSM 15497 / L2-TR).